Reading from the N-terminus, the 397-residue chain is MALSRLSSSSSSSNGSNLFNPFSAAFTLNRPISSDTTATLTIETSLPFTAHNCDPPSRSVTTSPSELLSFFRTMALMRRMEIAADSLYKANLIRGFCHLYDGQEAVAVGMEAGTTKKDCIITAYRDHCTFLGRGGTLLRVYAELMGRRDGCSKGKGGSMHFYKKDSGFYGGHGIVGAQVPLGCGLAFGQKYLKDESVTFALYGDGAANQGQLFEALNISALWDLPAILVCENNHYGMGTATWRSAKSPAYFKRGDYVPGLKVDGMDALAVKQACKFAKEHALKNGPIILEMDTYRYHGHSMSDPGSTYRTRDEISGVRQERDPIERVRKLLLSHDIATEKELKDTEKEVRKEVDEAIAKAKDSPMPDPSDLFSNVYVKGYGVEAFGVDRKEVRVTLP.

Pyruvate is bound by residues His98, Tyr124, Arg125, Gly173, Val175, Asp204, Gly205, Ala206, Asn233, and Tyr235. The thiamine diphosphate site is built by Tyr124, Arg125, Gly173, Val175, Asp204, Gly205, Ala206, and Asn233. Residue Asp204 participates in Mg(2+) binding. Residues Asn233 and Tyr235 each contribute to the Mg(2+) site. Residue His299 coordinates thiamine diphosphate.

In terms of assembly, tetramer of 2 alpha and 2 beta subunits. Requires thiamine diphosphate as cofactor. The cofactor is Mg(2+).

It localises to the mitochondrion matrix. The catalysed reaction is N(6)-[(R)-lipoyl]-L-lysyl-[protein] + pyruvate + H(+) = N(6)-[(R)-S(8)-acetyldihydrolipoyl]-L-lysyl-[protein] + CO2. Its activity is regulated as follows. E1 activity is regulated by phosphorylation (inactivation) and dephosphorylation (activation) of the alpha subunit. Its function is as follows. The pyruvate dehydrogenase complex catalyzes the overall conversion of pyruvate to acetyl-CoA and CO(2). It contains multiple copies of three enzymatic components: pyruvate dehydrogenase (E1), dihydrolipoamide acetyltransferase (E2) and lipoamide dehydrogenase (E3). The polypeptide is Pyruvate dehydrogenase E1 component subunit alpha, mitochondrial (Pisum sativum (Garden pea)).